A 145-amino-acid chain; its full sequence is MDLNFDLYMNDVVEQARNEIEHAGYHQLTSAEDVDQVLQQKGTSLVMVNSVCGCAGGIARPAAAHALHYDKLPQRLVTVFAGQDKEATQQAREYFEGYAPSSPSFALIKDGKITEMIERHQIEGHDVMDVINQLQALFDKYCEER.

The protein belongs to the bacilliredoxin family.

The polypeptide is Bacilliredoxin SERP1075 (Staphylococcus epidermidis (strain ATCC 35984 / DSM 28319 / BCRC 17069 / CCUG 31568 / BM 3577 / RP62A)).